A 396-amino-acid polypeptide reads, in one-letter code: Ornithine aminotransferase 2 (396 aa).

Lys255 carries the N6-(pyridoxal phosphate)lysine modification.

Belongs to the class-III pyridoxal-phosphate-dependent aminotransferase family. OAT subfamily. Pyridoxal 5'-phosphate is required as a cofactor.

Its subcellular location is the cytoplasm. It catalyses the reaction a 2-oxocarboxylate + L-ornithine = L-glutamate 5-semialdehyde + an L-alpha-amino acid. It functions in the pathway amino-acid biosynthesis; L-proline biosynthesis; L-glutamate 5-semialdehyde from L-ornithine: step 1/1. Functionally, catalyzes the interconversion of ornithine to glutamate semialdehyde. This chain is Ornithine aminotransferase 2, found in Staphylococcus aureus (strain MRSA252).